The sequence spans 336 residues: Foldase protein PrsA (336 aa).

The first 22 residues, 1 to 22 (MKSAKKLLSVLCLGIFILTFTA), serve as a signal peptide directing secretion. Cys23 carries the N-palmitoyl cysteine lipid modification. Residue Cys23 is the site of S-diacylglycerol cysteine attachment. Residues 194 to 286 (PNTMNVSHIL…FGYHIIKINS (93 aa)) enclose the PpiC domain.

It belongs to the PrsA family.

Its subcellular location is the cell membrane. It catalyses the reaction [protein]-peptidylproline (omega=180) = [protein]-peptidylproline (omega=0). Plays a major role in protein secretion by helping the post-translocational extracellular folding of several secreted proteins. This Clostridium botulinum (strain 657 / Type Ba4) protein is Foldase protein PrsA.